We begin with the raw amino-acid sequence, 130 residues long: Capsid protein (130 aa).

The viral RNA-binding stretch occupies residues 32–105 (EWISSNSRSQ…FATNSDCELI (74 aa)).

This sequence belongs to the Leviviricetes capsid protein family. As to quaternary structure, homodimer. The capsid proteins form dimers that assemble by group of 5. Twelve such pentamers are linked together with free dimers. The homodimers binds to the viral RNA via an operator hairpin, but also to many other RNA sequences in the viral genome; this interaction probably shifts the virus from the replicative to the assembly phase and ensures specific encapsidation of the viral genome.

Its subcellular location is the virion. In terms of biological role, capsid protein self-assembles to form an icosahedral capsid with a T=3 symmetry, about 26 nm in diameter, and consisting of 89 capsid proteins dimers (178 capsid proteins). Involved in viral genome encapsidation through the interaction between a capsid protein dimer and the multiple packaging signals present in the RNA genome. The capsid also contains 1 copy of the A2 maturation protein. Acts as a translational repressor of viral replicase synthesis late in infection. This latter function is the result of capsid protein interaction with an RNA hairpin which contains the replicase ribosome-binding site. The sequence is that of Capsid protein from Escherichia coli (Bacteriophage MS2).